A 338-amino-acid polypeptide reads, in one-letter code: MKEEILKVKEEIQTYIKESKTLQRLEEIRVNYMGKKGIFTELSKKMKDLSVEERPKIGQIINEVKEKINSLLDERNKALKEKELNERLESEIIDISLPGTKYNYGTIHPINETMELMKNIFSKMGFDIVDGPEIETVEYNFDALNIPKTHPSRDLTDTFYLNDSIVLRTQTSPVQIRYMLEHGTPFRMICPGKVYRPDYDISHTPMFHQMEGLVVGKDISFADLKGILTHFVKEVFGDRKVRFRPHFFPFTEPSAEMDVECMICHGDGCRLCKESGWIEIMGCGMVDPEVLKYVGLNPDEVNGFAFGVGIERVTMLRHGIGDLRAFFENDMRFLKQFK.

Residue glutamate 252 coordinates Mg(2+).

It belongs to the class-II aminoacyl-tRNA synthetase family. Phe-tRNA synthetase alpha subunit type 1 subfamily. As to quaternary structure, tetramer of two alpha and two beta subunits. Mg(2+) serves as cofactor.

It is found in the cytoplasm. The catalysed reaction is tRNA(Phe) + L-phenylalanine + ATP = L-phenylalanyl-tRNA(Phe) + AMP + diphosphate + H(+). The sequence is that of Phenylalanine--tRNA ligase alpha subunit from Fusobacterium nucleatum subsp. nucleatum (strain ATCC 25586 / DSM 15643 / BCRC 10681 / CIP 101130 / JCM 8532 / KCTC 2640 / LMG 13131 / VPI 4355).